A 352-amino-acid chain; its full sequence is ADP-ribosylation factor GTPase-activating protein GCS1 (352 aa).

Residues arginine 11–phenylalanine 127 form the Arf-GAP domain. The segment at cysteine 26–cysteine 49 adopts a C4-type zinc-finger fold. The segment covering serine 138–threonine 151 has biased composition (low complexity). Disordered regions lie at residues serine 138–glutamine 181 and asparagine 196–asparagine 231. Position 151 is a phosphothreonine (threonine 151). At serine 157 the chain carries Phosphoserine. Residue threonine 161 is modified to Phosphothreonine. Serine 168 carries the post-translational modification Phosphoserine. The span at serine 168–asparagine 179 shows a compositional bias: polar residues. Phosphothreonine is present on threonine 170. Position 260 is a phosphoserine (serine 260). A compositionally biased stretch (polar residues) spans asparagine 315 to threonine 330. Positions asparagine 315 to phenylalanine 352 are disordered. Basic and acidic residues predominate over residues glutamate 331 to glutamate 343.

The protein resides in the cytoplasm. It is found in the mitochondrion. The protein localises to the perinuclear region. It localises to the golgi apparatus. GTPase-activating protein (GAP) for ARF1 and ARF2. Involved in intracellular vesicular transport. Required for transport from the trans-Golgi network. Implicated in the regulation of retrograde transport from the Golgi to the ER and in actin cytoskeletal organization. May be involved in the maintenance of mitochondrial morphology, possibly through organizing the actin cytoskeleton in Saccharomyces. The sequence is that of ADP-ribosylation factor GTPase-activating protein GCS1 (GCS1) from Saccharomyces cerevisiae (strain ATCC 204508 / S288c) (Baker's yeast).